Consider the following 357-residue polypeptide: Putative ABC transporter ATP-binding protein MG303 (357 aa).

An ABC transporter domain is found at 72 to 312; it reads LFFNNISVFV…TSWLMQYGIT (241 aa). Residue 107 to 114 participates in ATP binding; the sequence is GESGSGKT.

Belongs to the ABC transporter superfamily.

The chain is Putative ABC transporter ATP-binding protein MG303 from Mycoplasma genitalium (strain ATCC 33530 / DSM 19775 / NCTC 10195 / G37) (Mycoplasmoides genitalium).